The sequence spans 610 residues: UvrABC system protein C (610 aa).

One can recognise a GIY-YIG domain in the interval S16 to V94. The UVR domain maps to D204–V239.

The protein belongs to the UvrC family. As to quaternary structure, interacts with UvrB in an incision complex.

It is found in the cytoplasm. Functionally, the UvrABC repair system catalyzes the recognition and processing of DNA lesions. UvrC both incises the 5' and 3' sides of the lesion. The N-terminal half is responsible for the 3' incision and the C-terminal half is responsible for the 5' incision. The protein is UvrABC system protein C of Salmonella schwarzengrund (strain CVM19633).